Here is a 167-residue protein sequence, read N- to C-terminus: MPKYNVSDFKSKFDKELTNHFNKNGYKQSFVFEDIRLLIAIACIIPAGLAFGIEYVYGFGVLKSYLKYLLPLYFLASCLLTFWSSVVKGSTVYVATKKERHIKISADTFLPLKNKPLITTKFTVLKNRNAVQLEWSVPVAHIFEEDGQISSATFEAEISKYLSQIEN.

Topologically, residues Met1–Arg36 are cytoplasmic. A helical transmembrane segment spans residues Leu37–Tyr57. Residues Gly58–Tyr68 lie on the Lumenal side of the membrane. Residues Leu69 to Gly89 traverse the membrane as a helical segment. The Cytoplasmic portion of the chain corresponds to Ser90–Asn167.

It belongs to the SPCS2 family. As to quaternary structure, component of the signal peptidase complex (SPC) composed of a catalytic subunit sec11 and three accessory subunits spc1, spc2 and spc3. The complex induces a local thinning of the ER membrane which is used to measure the length of the signal peptide (SP) h-region of protein substrates. This ensures the selectivity of the complex towards h-regions shorter than 18-20 amino acids. SPC associates with the translocon complex.

It localises to the endoplasmic reticulum membrane. Its function is as follows. Component of the signal peptidase complex (SPC) which catalyzes the cleavage of N-terminal signal sequences from nascent proteins as they are translocated into the lumen of the endoplasmic reticulum. Enhances the enzymatic activity of SPC and facilitates the interactions between different components of the translocation site. This is Signal peptidase complex subunit 2 (spc2) from Schizosaccharomyces pombe (strain 972 / ATCC 24843) (Fission yeast).